The chain runs to 392 residues: Selenide, water dikinase 1 (392 aa).

Position 2 is an N-acetylserine (serine 2). The active site involves cysteine 31. ATP contacts are provided by residues lysine 32, 67–69, aspartate 87, aspartate 110, and 161–164; these read GMD and GGQT. Position 69 (aspartate 69) interacts with Mg(2+). Aspartate 110 is a Mg(2+) binding site. Residue aspartate 265 participates in Mg(2+) binding.

The protein belongs to the selenophosphate synthase 1 family. Class II subfamily. Homodimer. Heterodimer with isoform 3. As to quaternary structure, homodimer. Heterodimer with isoform 4. In terms of assembly, homodimer. Heterodimer with isoform 1. Homodimer. Heterodimer with isoform 2. Mg(2+) serves as cofactor. As to expression, gradually expressed during the cell cycle until G2/M phase and then decreases. In terms of tissue distribution, gradually expressed during the cell cycle until S phase and then decreases.

It localises to the cell membrane. It is found in the nucleus membrane. The protein resides in the cytoplasm. It carries out the reaction hydrogenselenide + ATP + H2O = selenophosphate + AMP + phosphate + 2 H(+). Its activity is regulated as follows. Activated by phosphate ions and by potassium ions. Synthesizes selenophosphate from selenide and ATP. The protein is Selenide, water dikinase 1 (SEPHS1) of Homo sapiens (Human).